The chain runs to 576 residues: Interleukin-1 receptor type 1 (576 aa).

An N-terminal signal peptide occupies residues 1-19; that stretch reads MENMKVLLGLICLMVPLLS. Over 20-338 the chain is Extracellular; sequence LEIDVCTEYP…QLIYPVPDFK (319 aa). 3 disulfide bridges follow: Cys-25–Cys-107, Cys-46–Cys-99, and Cys-145–Cys-199. 3 consecutive Ig-like C2-type domains span residues 25 to 115, 121 to 213, and 229 to 329; these read CTEY…VTVT, PGLC…YPVT, and PVIL…AHVQ. 7 N-linked (GlcNAc...) asparagine glycosylation sites follow: Asn-63, Asn-103, Asn-174, Asn-236, Asn-252, Asn-266, and Asn-300. Cysteines 251 and 315 form a disulfide. A helical transmembrane segment spans residues 339–359; sequence NYLIGGFIILTATIVCCVCIY. Topologically, residues 360–576 are cytoplasmic; that stretch reads KVFKVDIVLW…LPAATHLPLG (217 aa). A TIR domain is found at 386–541; that stretch reads KTYDAYILYP…RFWKNLRYQM (156 aa). Glu-473 is an active-site residue. Tyr-499 bears the Phosphotyrosine mark. Thr-556 bears the Phosphothreonine; by PKC mark.

It belongs to the interleukin-1 receptor family. The interleukin-1 receptor complex is a heterodimer of IL1R1 and IL1RAP. Interacts with PIK3R1. Interacts with IL1A. A soluble form (sIL1R1) is probably produced by proteolytic cleavage at the cell surface (shedding). Post-translationally, rapidly phosphorylated on Tyr-499 in response to IL-1, which creates a SH2 binding site for the PI 3-kinase regulatory subunit PIK3R1. In terms of tissue distribution, isoform 2 is expressed in various brain tissues.

Its subcellular location is the membrane. The protein resides in the cell membrane. It is found in the secreted. It catalyses the reaction NAD(+) + H2O = ADP-D-ribose + nicotinamide + H(+). Receptor for IL1A, IL1B and IL1RN. After binding to interleukin-1 associates with the coreceptor IL1RAP to form the high affinity interleukin-1 receptor complex which mediates interleukin-1-dependent activation of NF-kappa-B, MAPK and other pathways. Signaling involves the recruitment of adapter molecules such as TOLLIP, MYD88, and IRAK1 or IRAK2 via the respective TIR domains of the receptor/coreceptor subunits. Binds ligands with comparable affinity and binding of antagonist IL1RN prevents association with IL1RAP to form a signaling complex. Involved in IL1B-mediated costimulation of IFNG production from T-helper 1 (Th1) cells. Functionally, unable to mediate canonical IL-1 signaling. Cooperates with IL1RAP isoform 3 to mediate IL1B-induced neuronal activity including IL1B-potentiated NMDA-induced calcium influx mediated by Akt kinase activation. This chain is Interleukin-1 receptor type 1 (Il1r1), found in Mus musculus (Mouse).